Consider the following 717-residue polypeptide: Polyribonucleotide nucleotidyltransferase (717 aa).

Mg(2+)-binding residues include Asp-488 and Asp-494. The KH domain occupies 555-614; that stretch reads PRIEVMNIPVDKIREVIGSGGKVIREIVEKTGAKINIDDDGTVKIASASAKEIEAARKWI. Residues 624–692 enclose the S1 motif domain; it reads GQVYEGTVVK…ERGKVRLSMK (69 aa).

It belongs to the polyribonucleotide nucleotidyltransferase family. The cofactor is Mg(2+).

The protein localises to the cytoplasm. It catalyses the reaction RNA(n+1) + phosphate = RNA(n) + a ribonucleoside 5'-diphosphate. Functionally, involved in mRNA degradation. Catalyzes the phosphorolysis of single-stranded polyribonucleotides processively in the 3'- to 5'-direction. This is Polyribonucleotide nucleotidyltransferase from Rhizobium meliloti (strain 1021) (Ensifer meliloti).